A 159-amino-acid polypeptide reads, in one-letter code: Type IV major alpha-pilin (159 aa).

Residues 1-6 (MNAQKG) constitute a propeptide, leader sequence. N-methylphenylalanine is present on F7. Residues 7 to 27 (FTLIELMIVIAIIGILAAIAL) form a helical membrane-spanning segment. The segment at 64 to 87 (VLSEESSTSKENIGLTSSETSTKP) is disordered. Positions 67–87 (EESSTSKENIGLTSSETSTKP) are enriched in polar residues. C137 and C156 form a disulfide bridge.

This sequence belongs to the N-Me-Phe pilin family. In terms of assembly, major component of the type IV pilus (T4P) that plays a role in surface and attachment to the host epithelial tissues.

It is found in the fimbrium. Its subcellular location is the membrane. The protein is Type IV major alpha-pilin (tfpI) of Moraxella bovis.